Here is a 544-residue protein sequence, read N- to C-terminus: MTKFIFVTGGVVSSLGKGITAASLAAVLEARGVNVTMTKMDPYINVDPGTMSPFQHGEVFVTEDGAETDLDLGYYERFLRHSKMSKSNNFTSGRIYQNVLNKERRGEYLGGTVQVIPHITDEIKSKILASGEGYDVAIIEIGGTVGDIESLPFMEAVRQMQVELGRHRAMLMHLTLVPYIASAGETKTKPTQHSVKELRSIGLQPDILICRSDHHISPDNRRKIALFTNVEERAVIMCEDAQSIYQIPRTLHEQDLDDLICERFGLDLPEADLSDWDKVVEAQLNPESTVTVAMVGKYVELPDAYKSINEALLHAGITHKVDVKIDYIDAERLEDDDSLLAQLHNADAILVPGGFGERGTMGKIKAITYARENKVPYLGICLGMQLAVIEYARNVLHIDANSSEFDRKTAEPIIGLITEWLDERGELQIRSDDSDLGGTMRLGAQQAELVAGSKLAQIYGATNITERHRHRYEMNNRYIEPLEQAGMTISGYSAKQHLVESVELADHPWFVAVQFHPEFTSSPRGGHPLFNSFVKAAKNYSEAK.

The segment at 1–266 is amidoligase domain; the sequence is MTKFIFVTGG…DDLICERFGL (266 aa). CTP is bound at residue S13. A UTP-binding site is contributed by S13. ATP contacts are provided by residues 14–19 and D71; that span reads SLGKGI. 2 residues coordinate Mg(2+): D71 and E140. Residues 147 to 149, 187 to 192, and K223 each bind CTP; these read DIE and KTKPTQ. UTP-binding positions include 187 to 192 and K223; that span reads KTKPTQ. A Glutamine amidotransferase type-1 domain is found at 291-543; it reads TVAMVGKYVE…VKAAKNYSEA (253 aa). G354 lines the L-glutamine pocket. C381 serves as the catalytic Nucleophile; for glutamine hydrolysis. L-glutamine is bound by residues 382-385, E404, and R471; that span reads LGMQ. Residues H516 and E518 contribute to the active site.

This sequence belongs to the CTP synthase family. As to quaternary structure, homotetramer.

It carries out the reaction UTP + L-glutamine + ATP + H2O = CTP + L-glutamate + ADP + phosphate + 2 H(+). It catalyses the reaction L-glutamine + H2O = L-glutamate + NH4(+). The enzyme catalyses UTP + NH4(+) + ATP = CTP + ADP + phosphate + 2 H(+). It functions in the pathway pyrimidine metabolism; CTP biosynthesis via de novo pathway; CTP from UDP: step 2/2. Its activity is regulated as follows. Allosterically activated by GTP, when glutamine is the substrate; GTP has no effect on the reaction when ammonia is the substrate. The allosteric effector GTP functions by stabilizing the protein conformation that binds the tetrahedral intermediate(s) formed during glutamine hydrolysis. Inhibited by the product CTP, via allosteric rather than competitive inhibition. In terms of biological role, catalyzes the ATP-dependent amination of UTP to CTP with either L-glutamine or ammonia as the source of nitrogen. Regulates intracellular CTP levels through interactions with the four ribonucleotide triphosphates. This Psychrobacter arcticus (strain DSM 17307 / VKM B-2377 / 273-4) protein is CTP synthase.